A 374-amino-acid chain; its full sequence is Chaperone protein DnaJ (374 aa).

Residues 4-68 (DYYDILGVSR…QMRGRYDQFG (65 aa)) form the J domain. The CR-type zinc finger occupies 133-215 (GGEQQIRISH…CGGRGQNQVS (83 aa)). 8 residues coordinate Zn(2+): Cys146, Cys149, Cys163, Cys166, Cys189, Cys192, Cys203, and Cys206. 4 CXXCXGXG motif repeats span residues 146-153 (CKTCEGTG), 163-170 (CSTCQGSG), 189-196 (CPTCNGQG), and 203-210 (CDSCGGRG).

This sequence belongs to the DnaJ family. Homodimer. Zn(2+) serves as cofactor.

The protein localises to the cytoplasm. Functionally, participates actively in the response to hyperosmotic and heat shock by preventing the aggregation of stress-denatured proteins and by disaggregating proteins, also in an autonomous, DnaK-independent fashion. Unfolded proteins bind initially to DnaJ; upon interaction with the DnaJ-bound protein, DnaK hydrolyzes its bound ATP, resulting in the formation of a stable complex. GrpE releases ADP from DnaK; ATP binding to DnaK triggers the release of the substrate protein, thus completing the reaction cycle. Several rounds of ATP-dependent interactions between DnaJ, DnaK and GrpE are required for fully efficient folding. Also involved, together with DnaK and GrpE, in the DNA replication of plasmids through activation of initiation proteins. The polypeptide is Chaperone protein DnaJ (Acaryochloris marina (strain MBIC 11017)).